We begin with the raw amino-acid sequence, 590 residues long: UvrABC system protein C (590 aa).

The region spanning 15–98 (AEPGVYQFVA…VKRHQPRYNV (84 aa)) is the GIY-YIG domain. The region spanning 207-242 (GALADPLRREMAAAAQAEAFERAANLRDRLAVVEGF) is the UVR domain.

Belongs to the UvrC family. Interacts with UvrB in an incision complex.

Its subcellular location is the cytoplasm. In terms of biological role, the UvrABC repair system catalyzes the recognition and processing of DNA lesions. UvrC both incises the 5' and 3' sides of the lesion. The N-terminal half is responsible for the 3' incision and the C-terminal half is responsible for the 5' incision. The polypeptide is UvrABC system protein C (Halobacterium salinarum (strain ATCC 29341 / DSM 671 / R1)).